The primary structure comprises 233 residues: Lipoprotein-releasing system ATP-binding protein LolD (233 aa).

One can recognise an ABC transporter domain in the interval 6–233; it reads LQCDNLCKRY…TAELSLMGAE (228 aa). 42 to 49 lines the ATP pocket; that stretch reads GSSGSGKS.

It belongs to the ABC transporter superfamily. Lipoprotein translocase (TC 3.A.1.125) family. As to quaternary structure, the complex is composed of two ATP-binding proteins (LolD) and two transmembrane proteins (LolC and LolE).

Its subcellular location is the cell inner membrane. Its function is as follows. Part of the ABC transporter complex LolCDE involved in the translocation of mature outer membrane-directed lipoproteins, from the inner membrane to the periplasmic chaperone, LolA. Responsible for the formation of the LolA-lipoprotein complex in an ATP-dependent manner. This is Lipoprotein-releasing system ATP-binding protein LolD from Escherichia coli O6:K15:H31 (strain 536 / UPEC).